Reading from the N-terminus, the 332-residue chain is Putative D-threonate 4-phosphate dehydrogenase (332 aa).

2 residues coordinate substrate: His-138 and Thr-139. A divalent metal cation is bound by residues His-168, His-211, and His-266. The substrate site is built by Lys-274 and Arg-292.

Belongs to the PdxA family. PdxA2 subfamily. Homodimer. A divalent metal cation serves as cofactor.

It catalyses the reaction 4-O-phospho-D-threonate + NAD(+) = dihydroxyacetone phosphate + CO2 + NADH. In terms of biological role, catalyzes the NAD-dependent oxidation and subsequent decarboxylation of D-threonate 4-phosphate to produce dihydroxyacetone phosphate (DHAP). The chain is Putative D-threonate 4-phosphate dehydrogenase from Fusobacterium nucleatum subsp. nucleatum (strain ATCC 25586 / DSM 15643 / BCRC 10681 / CIP 101130 / JCM 8532 / KCTC 2640 / LMG 13131 / VPI 4355).